A 503-amino-acid chain; its full sequence is Probable cytosol aminopeptidase (503 aa).

Mn(2+) is bound by residues Lys-270 and Asp-275. Lys-282 is an active-site residue. Residues Asp-293, Asp-352, and Glu-354 each coordinate Mn(2+). Arg-356 is an active-site residue.

It belongs to the peptidase M17 family. Mn(2+) serves as cofactor.

The protein localises to the cytoplasm. The catalysed reaction is Release of an N-terminal amino acid, Xaa-|-Yaa-, in which Xaa is preferably Leu, but may be other amino acids including Pro although not Arg or Lys, and Yaa may be Pro. Amino acid amides and methyl esters are also readily hydrolyzed, but rates on arylamides are exceedingly low.. It carries out the reaction Release of an N-terminal amino acid, preferentially leucine, but not glutamic or aspartic acids.. Presumably involved in the processing and regular turnover of intracellular proteins. Catalyzes the removal of unsubstituted N-terminal amino acids from various peptides. The chain is Probable cytosol aminopeptidase from Klebsiella pneumoniae (strain 342).